The sequence spans 79 residues: DNA-directed RNA polymerase subunit omega (79 aa).

Belongs to the RNA polymerase subunit omega family. The RNAP catalytic core consists of 2 alpha, 1 beta, 1 beta' and 1 omega subunit. When a sigma factor is associated with the core the holoenzyme is formed, which can initiate transcription.

It carries out the reaction RNA(n) + a ribonucleoside 5'-triphosphate = RNA(n+1) + diphosphate. Promotes RNA polymerase assembly. Latches the N- and C-terminal regions of the beta' subunit thereby facilitating its interaction with the beta and alpha subunits. In Bdellovibrio bacteriovorus (strain ATCC 15356 / DSM 50701 / NCIMB 9529 / HD100), this protein is DNA-directed RNA polymerase subunit omega.